We begin with the raw amino-acid sequence, 977 residues long: Receptor-like protein kinase 7 (977 aa).

The N-terminal stretch at 1–28 (MAPSLRNFNFFHRFSTFLVFSLFSVVSS) is a signal peptide. Over 29 to 608 (DDLQVLLKLK…NPSRSHGDTR (580 aa)) the chain is Extracellular. LRR repeat units follow at residues 71–95 (RGNV…SVCE), 96–119 (IQSL…DLKN), and 121–145 (TSLK…SLNQ). Asn73 and Asn119 each carry an N-linked (GlcNAc...) asparagine glycan. N-linked (GlcNAc...) asparagine glycans are attached at residues Asn152 and Asn167. 17 LRR repeats span residues 168–194 (ATSL…VVSL), 195–218 (KKLS…IGDL), 219–242 (TELR…ISKL), 244–265 (NLWQ…GFGN), 267–289 (KNLT…LRSL), 290–312 (TNLV…EFGE), 313–337 (FKDL…LGSL), 339–361 (DFDF…MCKN), 362–385 (GKMK…YANC), 386–409 (LTLQ…LWGL), 411–433 (KLEI…IKNG), 434–457 (KMLG…IGDT), 458–481 (ESLT…IGKL), 482–505 (KGLS…IGSC), 507–529 (MLSD…LGSL), 530–553 (PTLN…LSSL), and 555–578 (LSLL…SYNG). Asn204 carries an N-linked (GlcNAc...) asparagine glycan. N-linked (GlcNAc...) asparagine glycans are attached at residues Asn252 and Asn268. Residue Asn318 is glycosylated (N-linked (GlcNAc...) asparagine). N-linked (GlcNAc...) asparagine glycans are attached at residues Asn373 and Asn399. N-linked (GlcNAc...) asparagine glycans are attached at residues Asn536 and Asn577. Residues 609 to 629 (VFVLCIVFGLLILLASLVFFL) traverse the membrane as a helical segment. The Cytoplasmic segment spans residues 630–977 (YLKKTEKKEG…ESDVKVKEIS (348 aa)). The Protein kinase domain maps to 666 to 959 (IKEENLIGRG…QMIEDAEPCR (294 aa)). ATP-binding positions include 672 to 680 (IGRGGCGDV) and Lys694. The active-site Proton acceptor is Asp805.

It belongs to the protein kinase superfamily. Ser/Thr protein kinase family. In terms of assembly, interacts with PIP1. As to expression, expressed in roots, stems and dry seeds. Expressed at junctions between organs, such as the insertion zones of stamens, petals and sepals, the transition zones of floral stem and pedicel, pedicel and silique, and floral stem and cauline leaves.

It is found in the membrane. It carries out the reaction L-seryl-[protein] + ATP = O-phospho-L-seryl-[protein] + ADP + H(+). The enzyme catalyses L-threonyl-[protein] + ATP = O-phospho-L-threonyl-[protein] + ADP + H(+). In terms of biological role, plays a role in pattern-triggered immunity (PTI) signaling induced by pathogen-associated molecular patterns (PAMPs). Acts as a receptor for PIP1 defense peptide. PIP1 is an endogenous secreted peptide that acts as elicitor of immune response and positive regulator of defense response. Involved in the control of seed germination speed, in tolerance to oxidative stress and in maintaining seed longevity. The protein is Receptor-like protein kinase 7 of Arabidopsis thaliana (Mouse-ear cress).